The sequence spans 444 residues: Argininosuccinate synthase (444 aa).

ATP contacts are provided by residues 18-26 and Ala44; that span reads AFSGGLDTS. Residue Tyr100 participates in L-citrulline binding. ATP contacts are provided by Gly130 and Thr132. Thr132, Asn136, and Asp137 together coordinate L-aspartate. Asn136 serves as a coordination point for L-citrulline. Asp137 contacts ATP. Residues Arg140 and Ser193 each contribute to the L-citrulline site. ATP is bound at residue Asp195. L-citrulline is bound by residues Thr202, Glu204, and Glu281.

The protein belongs to the argininosuccinate synthase family. Type 2 subfamily. As to quaternary structure, homotetramer.

It is found in the cytoplasm. It catalyses the reaction L-citrulline + L-aspartate + ATP = 2-(N(omega)-L-arginino)succinate + AMP + diphosphate + H(+). It participates in amino-acid biosynthesis; L-arginine biosynthesis; L-arginine from L-ornithine and carbamoyl phosphate: step 2/3. This Actinobacillus succinogenes (strain ATCC 55618 / DSM 22257 / CCUG 43843 / 130Z) protein is Argininosuccinate synthase.